The sequence spans 1152 residues: P3N-PIPO polyprotein (1152 aa).

The region spanning 292–437 is the Peptidase S30 domain; that stretch reads VMNQQTLMAF…HSITHRMVQY (146 aa). Active-site for P1 proteinase activity residues include H345, D354, and S388. An Involved in interaction with stylet and aphid transmission motif is present at residues 489–492; it reads KITC. Residues 747 to 749 carry the Involved in virions binding and aphid transmission motif; that stretch reads PTK. Residues 773–895 enclose the Peptidase C6 domain; it reads MFVTKDGYCY…ESEMQHYRVG (123 aa). Residues C781 and H854 each act as for helper component proteinase activity in the active site.

Belongs to the potyviridae P3N-PIPO polyprotein family. As to quaternary structure, interacts (via PIPO domain) with host PCaP1 protein; this interaction may help to anchor the movement complex to the plasma membrane from which the complex could move to the plasmodesmata. In terms of processing, potyviral RNA is expressed as two polyproteins which undergo post-translational proteolytic processing. Genome polyprotein is processed by NIa-pro, P1 and HC-pro proteinases resulting in the production of at least ten individual proteins. P3N-PIPO is cleaved by P1 and HC-pro proteinases resulting in the production of three individual proteins. The P1 proteinase and the HC-pro cleave only their respective C-termini autocatalytically.

It is found in the host cell junction. It localises to the host plasmodesma. It carries out the reaction Hydrolyzes a Gly-|-Gly bond at its own C-terminus, commonly in the sequence -Tyr-Xaa-Val-Gly-|-Gly, in the processing of the potyviral polyprotein.. In terms of biological role, required for aphid transmission and also has proteolytic activity. Only cleaves a Gly-Gly dipeptide at its own C-terminus. Interacts with virions and aphid stylets. Acts as a suppressor of RNA-mediated gene silencing, also known as post-transcriptional gene silencing (PTGS), a mechanism of plant viral defense that limits the accumulation of viral RNAs. May have RNA-binding activity. Its function is as follows. Allows efficient cell to cell propagation, by bypassing the host cell wall barrier. Transports viral genome to neighboring plant cells directly through plasmosdesmata, without any budding. The polypeptide is P3N-PIPO polyprotein (Lettuce mosaic virus (strain 0 / isolate French) (LMV)).